A 177-amino-acid polypeptide reads, in one-letter code: ATP synthase subunit delta (177 aa).

Belongs to the ATPase delta chain family. In terms of assembly, F-type ATPases have 2 components, F(1) - the catalytic core - and F(0) - the membrane proton channel. F(1) has five subunits: alpha(3), beta(3), gamma(1), delta(1), epsilon(1). F(0) has three main subunits: a(1), b(2) and c(10-14). The alpha and beta chains form an alternating ring which encloses part of the gamma chain. F(1) is attached to F(0) by a central stalk formed by the gamma and epsilon chains, while a peripheral stalk is formed by the delta and b chains.

It localises to the cell membrane. Its function is as follows. F(1)F(0) ATP synthase produces ATP from ADP in the presence of a proton or sodium gradient. F-type ATPases consist of two structural domains, F(1) containing the extramembraneous catalytic core and F(0) containing the membrane proton channel, linked together by a central stalk and a peripheral stalk. During catalysis, ATP synthesis in the catalytic domain of F(1) is coupled via a rotary mechanism of the central stalk subunits to proton translocation. This protein is part of the stalk that links CF(0) to CF(1). It either transmits conformational changes from CF(0) to CF(1) or is implicated in proton conduction. The chain is ATP synthase subunit delta from Caldanaerobacter subterraneus subsp. tengcongensis (strain DSM 15242 / JCM 11007 / NBRC 100824 / MB4) (Thermoanaerobacter tengcongensis).